We begin with the raw amino-acid sequence, 346 residues long: Putative alpha/beta hydrolase R526 (346 aa).

It belongs to the AB hydrolase 3 family.

It is found in the virion. The chain is Putative alpha/beta hydrolase R526 from Acanthamoeba polyphaga mimivirus (APMV).